The following is a 297-amino-acid chain: Probable oxidoreductase (297 aa).

Residue 9–33 (VVTGGASGLGAETVRALAAAGAEVT) coordinates NAD(+). A substrate-binding site is contributed by Ser-138. The active-site Proton acceptor is the Tyr-164.

The protein belongs to the short-chain dehydrogenases/reductases (SDR) family.

This Streptomyces lividans protein is Probable oxidoreductase.